Reading from the N-terminus, the 1856-residue chain is Zinc metalloprotease ZmpC (1856 aa).

Positions 1 to 42 are cleaved as a signal peptide; it reads MSRKSIGEKRHSFSMRKLSVGLVSVTVSSFFLMSQGIQSVSA. Positions 43–95 are excised as a propeptide; that stretch reads DNMESPIHYKYMTEGKLTDEEKSLLVEALPQLAEESDDTYYLVYRSQQFLPNT. An LPXTG sorting signal motif is present at residues 92 to 96; sequence LPNTG. T95 bears the Pentaglycyl murein peptidoglycan amidated threonine mark. 2 helical membrane passes run 97 to 117 and 130 to 152; these read FNPT…VLLV and FLLL…TSQI. The Extracellular portion of the chain corresponds to 153–1856; the sequence is LSAYNSQLSI…TDDFRNSIYK (1704 aa). Composition is skewed to polar residues over residues 254-267 and 286-295; these read NLSS…QVEQ and NPVSATTVQS. The disordered stretch occupies residues 254 to 362; it reads NLSSNDSFAS…GEAAVREEEP (109 aa). 2 stretches are compositionally biased toward basic and acidic residues: residues 322-334 and 351-361; these read PGHE…REDL and HEGEAAVREEE. Residues 417-496 enclose the G5 domain; that stretch reads ALEVTTRNRT…NEVVKVGTLV (80 aa). Position 1502 (H1502) interacts with Zn(2+). E1503 is an active-site residue. Zn(2+) contacts are provided by H1506 and E1526.

This sequence belongs to the peptidase M26 family. The cofactor is Zn(2+). In terms of processing, the Gram-positive cell-wall anchor motif LPXTG is located in the N-terminal part, in contrast to such motifs in other known streptococcal and staphylococcal proteins. The protease could be cleaved by the sortase and anchored in the membrane via the two potential N-terminal transmembrane domains, whereas the propeptide located prior to the LPXTG motif would remain attached to the cell wall peptidoglycan by an amide bond.

It is found in the secreted. The protein resides in the cell wall. It localises to the membrane. Zinc metalloproteinase that specifically cleaves human matrix metalloproteinase 9 (MMP-9), leading to its activation. May play a role in pneumococcal virulence and pathogenicity in the lung. This Streptococcus pneumoniae serotype 4 (strain ATCC BAA-334 / TIGR4) protein is Zinc metalloprotease ZmpC (zmpC).